Here is a 701-residue protein sequence, read N- to C-terminus: Aryl hydrocarbon receptor repressor (701 aa).

The tract at residues 1 to 38 is disordered; the sequence is MMIPSGECTYAGRKRRKPIQKRRLTMGTEKSNPSKRHR. Residues 12–24 show a composition bias toward basic residues; the sequence is GRKRRKPIQKRRL. One can recognise a bHLH domain in the interval 25–78; sequence TMGTEKSNPSKRHRDRLNTELDHLASLLPFSPDIISKLDKLSVLRLSVSYLRVK. The 71-residue stretch at 106–176 folds into the PAS domain; it reads PVQEGRLLLE…RQLHWAMDPP (71 aa). Disordered regions lie at residues 360–389 and 409–436; these read DPKG…QREM and TEQR…LVPH. The segment covering 365–375 has biased composition (basic and acidic residues); that stretch reads SGDREEDDQKH. Residues 414-430 show a composition bias toward polar residues; that stretch reads QEGTTKLTRQPSKSEPS. The segment at 555 to 701 is needed for transcriptional repression; that stretch reads ASTTSCVWLG…SKGSDGIFLP (147 aa). Residues K583 and K660 each participate in a glycyl lysine isopeptide (Lys-Gly) (interchain with G-Cter in SUMO2) cross-link.

In terms of assembly, interacts with ARNT, ANKRA2, HDAC4 and HDAC5. Interacts with ARNT; forms a heterodimer with ARNT. As to expression, highly expressed in testis and weakly expressed in heart and liver. Highly expressed in small intestine and cecum in a male-dominant sexual dimorphic fashion.

It is found in the cytoplasm. The protein localises to the nucleus. Mediates dioxin toxicity and is involved in regulation of cell growth and differentiation. Represses the transcription activity of AHR by competing with this transcription factor for heterodimer formation with the ARNT and subsequently binding to the xenobiotic response element (XRE) sequence present in the promoter regulatory region of variety of genes. Represses CYP1A1 by binding the XRE sequence and recruiting ANKRA2, HDAC4 and/or HDAC5. Autoregulates its expression by associating with its own XRE site. The protein is Aryl hydrocarbon receptor repressor (Ahrr) of Rattus norvegicus (Rat).